The sequence spans 925 residues: Alanine--tRNA ligase (925 aa).

Residues H611, H615, C714, and H718 each contribute to the Zn(2+) site.

It belongs to the class-II aminoacyl-tRNA synthetase family. The cofactor is Zn(2+).

It localises to the cytoplasm. The enzyme catalyses tRNA(Ala) + L-alanine + ATP = L-alanyl-tRNA(Ala) + AMP + diphosphate. Functionally, catalyzes the attachment of alanine to tRNA(Ala) in a two-step reaction: alanine is first activated by ATP to form Ala-AMP and then transferred to the acceptor end of tRNA(Ala). Also edits incorrectly charged Ser-tRNA(Ala) and Gly-tRNA(Ala) via its editing domain. In Methanosarcina acetivorans (strain ATCC 35395 / DSM 2834 / JCM 12185 / C2A), this protein is Alanine--tRNA ligase.